Reading from the N-terminus, the 390-residue chain is Putative RING-H2 finger protein ATL12 (390 aa).

Positions 1 to 22 (MNSPQEISILFFFIIFLDYVSA) are cleaved as a signal peptide. Residues 41–61 (LAIITGVFSIVFTLTFVLLVY) traverse the membrane as a helical segment. The RING-type; atypical zinc finger occupies 124 to 166 (CSVCLSKFEDVEILRLLPKCRHAFHIGCIDQWLEQHATCPLCR).

The protein belongs to the RING-type zinc finger family. ATL subfamily.

It localises to the membrane. The enzyme catalyses S-ubiquitinyl-[E2 ubiquitin-conjugating enzyme]-L-cysteine + [acceptor protein]-L-lysine = [E2 ubiquitin-conjugating enzyme]-L-cysteine + N(6)-ubiquitinyl-[acceptor protein]-L-lysine.. The protein operates within protein modification; protein ubiquitination. In Arabidopsis thaliana (Mouse-ear cress), this protein is Putative RING-H2 finger protein ATL12 (ATL12).